A 189-amino-acid chain; its full sequence is Elongation factor P (189 aa).

Lys34 carries the N6-(3,6-diaminohexanoyl)-5-hydroxylysine modification.

It belongs to the elongation factor P family. May be beta-lysylated on the epsilon-amino group of Lys-34 by the combined action of EpmA and EpmB, and then hydroxylated on the C5 position of the same residue by EpmC (if this protein is present). Lysylation is critical for the stimulatory effect of EF-P on peptide-bond formation. The lysylation moiety may extend toward the peptidyltransferase center and stabilize the terminal 3-CCA end of the tRNA. Hydroxylation of the C5 position on Lys-34 may allow additional potential stabilizing hydrogen-bond interactions with the P-tRNA.

Its subcellular location is the cytoplasm. It participates in protein biosynthesis; polypeptide chain elongation. Functionally, involved in peptide bond synthesis. Alleviates ribosome stalling that occurs when 3 or more consecutive Pro residues or the sequence PPG is present in a protein, possibly by augmenting the peptidyl transferase activity of the ribosome. Modification of Lys-34 is required for alleviation. The chain is Elongation factor P from Halorhodospira halophila (strain DSM 244 / SL1) (Ectothiorhodospira halophila (strain DSM 244 / SL1)).